The following is a 1423-amino-acid chain: DNA-directed RNA polymerase subunit beta' (1423 aa).

The Zn(2+) site is built by Cys-71, Cys-73, Cys-86, and Cys-89. The Mg(2+) site is built by Asp-461, Asp-463, and Asp-465. Positions 815, 889, 896, and 899 each coordinate Zn(2+).

The protein belongs to the RNA polymerase beta' chain family. As to quaternary structure, the RNAP catalytic core consists of 2 alpha, 1 beta, 1 beta' and 1 omega subunit. When a sigma factor is associated with the core the holoenzyme is formed, which can initiate transcription. Mg(2+) serves as cofactor. Requires Zn(2+) as cofactor.

It catalyses the reaction RNA(n) + a ribonucleoside 5'-triphosphate = RNA(n+1) + diphosphate. DNA-dependent RNA polymerase catalyzes the transcription of DNA into RNA using the four ribonucleoside triphosphates as substrates. In Actinobacillus pleuropneumoniae serotype 7 (strain AP76), this protein is DNA-directed RNA polymerase subunit beta'.